The chain runs to 848 residues: Protein SEY1 (848 aa).

The Cytoplasmic portion of the chain corresponds to 1-733 (MNGNFAAVGS…KRGALGGMTQ (733 aa)). The 231-residue stretch at 47–277 (GFNYHLISVF…FVGGVFLPEY (231 aa)) folds into the GB1/RHD3-type G domain. 57–64 (GSQSTGKS) contributes to the GTP binding site. Residues 734–754 (VPLYFWIALFAFGWNEIWMVI) form a helical membrane-spanning segment. Over 755 to 757 (RNP) the chain is Lumenal. Residues 758–778 (FLFILLLLSAGGTYVAYNLSL) traverse the membrane as a helical segment. The Cytoplasmic segment spans residues 779-848 (LGPMMQMTNA…KKKDYDDDGI (70 aa)). The interval 815–848 (LAMPASSKSSGGEQVRMDTLDSKGKKKDYDDDGI) is disordered. A compositionally biased stretch (basic and acidic residues) spans 829–848 (VRMDTLDSKGKKKDYDDDGI).

Belongs to the TRAFAC class dynamin-like GTPase superfamily. GB1/RHD3 GTPase family. RHD3 subfamily.

It is found in the endoplasmic reticulum membrane. Functionally, cooperates with the reticulon proteins and tubule-shaping DP1 family proteins to generate and maintain the structure of the tubular endoplasmic reticulum network. Has GTPase activity, which is required for its function in ER organization. This chain is Protein SEY1, found in Pyricularia oryzae (strain 70-15 / ATCC MYA-4617 / FGSC 8958) (Rice blast fungus).